Here is a 1323-residue protein sequence, read N- to C-terminus: Nck-associated protein 5-like (1323 aa).

Disordered regions lie at residues 1 to 22 (MDQP…DSME), 113 to 142 (QIPL…TSLP), 156 to 175 (QQLR…ALDA), 204 to 238 (PATP…PWAP), 260 to 314 (PGEE…DTLL), and 341 to 714 (GATG…EQPE). Positions 1 to 135 (MDQPAGGTGK…PTSPAPNVSE (135 aa)) are mediates interaction with CDK5RAP2 and is required for homodimerization and microtubule bundle formation. Residues 22 to 109 (ELSTCQELLH…LQQKLQLTAN (88 aa)) adopt a coiled-coil conformation. Composition is skewed to pro residues over residues 162 to 172 (GPGPPATPPPA) and 226 to 236 (CGPPQPEPSPW). A compositionally biased stretch (low complexity) spans 271–298 (ASSRAPPSAQGPSSGPHCAPGSSSSSSS). The span at 353 to 364 (PGKPNSPDPGPP) shows a compositional bias: pro residues. Serine 436, serine 447, serine 466, and serine 473 each carry phosphoserine; by CDK1. The (S/T)X(I/L)P motif 1 motif lies at 480–483 (SRIP). Residues serine 489, serine 492, and serine 494 each carry the phosphoserine modification. Residues 531–542 (LRPSQSTVSTAL) show a composition bias toward polar residues. Serine 573 carries the phosphoserine; by CDK1 modification. Basic and acidic residues predominate over residues 647 to 660 (RPGDPSHTPLRDRL). Threonine 654 carries the post-translational modification Phosphothreonine. Positions 743 to 1136 (RVYSSHSMGA…SGTPSKNLPK (394 aa)) are mediates interaction with beta-tubulin and is required for microtubule bundle formation. Serine 760 is modified (phosphoserine; by CDK1). Disordered regions lie at residues 778 to 875 (ALCP…HSAI), 892 to 948 (GQER…EVKT), 979 to 1003 (AYLS…GQAQ), and 1027 to 1323 (KELP…GSQG). Low complexity predominate over residues 799–817 (KPKSPHSSPTKLPSKSPTK). The short motif at 808–811 (TKLP) is the (S/T)X(I/L)P motif 2 element. A (S/T)X(I/L)P motif 3; required for interaction with MAPRE1 motif is present at residues 918-921 (SKLP). The span at 925-934 (RRTEATKNKD) shows a compositional bias: basic and acidic residues. Residues 942–985 (LRKEVKTEARKLEAESLNISKLMAKAEDLRRALEEEKAYLSRAR) are a coiled coil. Basic and acidic residues predominate over residues 1027–1041 (KELPPKSWREPKPEY). Polar residues-rich tracts occupy residues 1097 to 1112 (VSTT…TRTL) and 1124 to 1136 (HSSS…NLPK). Residues 1143-1153 (DPPPGAPPARP) are compositionally biased toward pro residues. Phosphoserine is present on serine 1184. Polar residues-rich tracts occupy residues 1225–1237 (TFPN…SSSD) and 1264–1273 (VDPSRTSTPQ). A compositionally biased stretch (low complexity) spans 1302–1323 (LETSESLSDSLYDSLSSCGSQG).

In terms of assembly, homodimer. Interacts with CDK5RAP2. Interacts with MAPRE1. Interacts with beta-tubulin. In terms of processing, CDK1/Cyclin B-dependent phosphorylation mediates its dissociation from centrosomes during mitosis.

The protein localises to the cytoplasm. It localises to the cytoskeleton. Its subcellular location is the microtubule organizing center. The protein resides in the centrosome. Its function is as follows. Regulates microtubule organization and stabilization. Promotes microtubule growth and bundling formation and stabilizes microtubules by increasing intense acetylation of microtubules. Both tubulin-binding and homodimer formation are required for NCKAP5L-mediated microtubule bundle formation. This is Nck-associated protein 5-like (Nckap5l) from Mus musculus (Mouse).